We begin with the raw amino-acid sequence, 346 residues long: 2,5-dichlorohydroquinone reductive dechlorinase (346 aa).

Positions 43-154 (PRFELFHFVF…YLCDALSGGT (112 aa)) constitute a GST N-terminal domain. The region spanning 189-335 (DRRPESMQAV…AIIQWPGHPP (147 aa)) is the GST C-terminal domain.

It belongs to the GST superfamily.

It catalyses the reaction 2,5-dichlorohydroquinone + 2 glutathione = chlorohydroquinone + glutathione disulfide + chloride + H(+). The catalysed reaction is chlorohydroquinone + 2 glutathione = hydroquinone + glutathione disulfide + chloride + H(+). The protein operates within xenobiotic degradation; gamma-hexachlorocyclohexane degradation. Functionally, catalyzes the degradation of 2,5-dichlorohydroquinone (2,5-DCHQ) into hydroquinone (HQ) via chlorohydroquinone (CHQ). The sequence is that of 2,5-dichlorohydroquinone reductive dechlorinase from Sphingobium indicum (strain DSM 16412 / CCM 7286 / MTCC 6364 / B90A).